We begin with the raw amino-acid sequence, 134 residues long: Small ribosomal subunit protein uS9 (134 aa).

Residues 114–134 (EVERKKYGLKKARRAPQFSKR) are disordered. The span at 120–134 (YGLKKARRAPQFSKR) shows a compositional bias: basic residues.

The protein belongs to the universal ribosomal protein uS9 family.

This Thermotoga sp. (strain RQ2) protein is Small ribosomal subunit protein uS9.